Consider the following 294-residue polypeptide: ATP synthase gamma chain (294 aa).

This sequence belongs to the ATPase gamma chain family. In terms of assembly, F-type ATPases have 2 components, CF(1) - the catalytic core - and CF(0) - the membrane proton channel. CF(1) has five subunits: alpha(3), beta(3), gamma(1), delta(1), epsilon(1). CF(0) has three main subunits: a, b and c.

Its subcellular location is the cell inner membrane. In terms of biological role, produces ATP from ADP in the presence of a proton gradient across the membrane. The gamma chain is believed to be important in regulating ATPase activity and the flow of protons through the CF(0) complex. The chain is ATP synthase gamma chain from Campylobacter lari (strain RM2100 / D67 / ATCC BAA-1060).